A 214-amino-acid chain; its full sequence is Pyrrolidone-carboxylate peptidase (214 aa).

Residues Glu-80, Cys-143, and His-166 contribute to the active site.

This sequence belongs to the peptidase C15 family. As to quaternary structure, homotetramer.

The protein resides in the cytoplasm. The enzyme catalyses Release of an N-terminal pyroglutamyl group from a polypeptide, the second amino acid generally not being Pro.. Its function is as follows. Removes 5-oxoproline from various penultimate amino acid residues except L-proline. The sequence is that of Pyrrolidone-carboxylate peptidase from Enterobacter sp. (strain 638).